The chain runs to 278 residues: Orotidine 5'-phosphate decarboxylase (278 aa).

The active-site Proton donor is lysine 95.

It belongs to the OMP decarboxylase family. Type 2 subfamily.

It catalyses the reaction orotidine 5'-phosphate + H(+) = UMP + CO2. It functions in the pathway pyrimidine metabolism; UMP biosynthesis via de novo pathway; UMP from orotate: step 2/2. This Mycobacterium ulcerans (strain Agy99) protein is Orotidine 5'-phosphate decarboxylase.